A 497-amino-acid chain; its full sequence is Probable cytosol aminopeptidase (497 aa).

Positions 264 and 269 each coordinate Mn(2+). Residue Lys-276 is part of the active site. Residues Asp-287, Asp-346, and Glu-348 each coordinate Mn(2+). Residue Arg-350 is part of the active site.

It belongs to the peptidase M17 family. Mn(2+) serves as cofactor.

It localises to the cytoplasm. It carries out the reaction Release of an N-terminal amino acid, Xaa-|-Yaa-, in which Xaa is preferably Leu, but may be other amino acids including Pro although not Arg or Lys, and Yaa may be Pro. Amino acid amides and methyl esters are also readily hydrolyzed, but rates on arylamides are exceedingly low.. The catalysed reaction is Release of an N-terminal amino acid, preferentially leucine, but not glutamic or aspartic acids.. Presumably involved in the processing and regular turnover of intracellular proteins. Catalyzes the removal of unsubstituted N-terminal amino acids from various peptides. The sequence is that of Probable cytosol aminopeptidase from Persephonella marina (strain DSM 14350 / EX-H1).